The following is a 427-amino-acid chain: Probable G-protein coupled receptor 150 (427 aa).

Residues 1 to 3 are Extracellular-facing; it reads MED. The helical transmembrane segment at 4–24 threads the bilayer; sequence PFSLAILNPASNLSVPTQPSW. Residues 25 to 50 lie on the Cytoplasmic side of the membrane; sequence SLNLTSEQGASVPGPHSPPRGPPSHR. Residues 51–71 form a helical membrane-spanning segment; it reads IHLVFLGIILVAAVAGNTTVL. Residues 72–89 lie on the Extracellular side of the membrane; the sequence is CRLCGGSSGPWPGPKRRK. A helical transmembrane segment spans residues 90-110; it reads MDFLLVQLAAADLYASGGTAL. Residues 111–170 lie on the Cytoplasmic side of the membrane; sequence SQLAWELLGDPRPALGDLACRLSHLLQASGRGASAHLVALIALERQLAVRIPQGPQLPAR. The helical transmembrane segment at 171 to 191 threads the bilayer; it reads ALAALSWLLALLLALPPTFVV. At 192-230 the chain is on the extracellular side; sequence RWDAPPSSTANAWPGKHCCRGIFAPLPRWHLQVYALYEA. A helical membrane pass occupies residues 231–251; the sequence is IVGFAAPVALLGFSCGHLLCV. Over 252–286 the chain is Cytoplasmic; that stretch reads WWQRGSQAPVARMPWSPSMARASLPSALPQAKVQS. Residues 287-307 traverse the membrane as a helical segment; it reads LKMSLALALLFVGCDLPYFAA. The Extracellular portion of the chain corresponds to 308-327; the sequence is RLAAAWSSKPAGDWERESLV. A helical membrane pass occupies residues 328 to 348; that stretch reads AAMRVLEVANSAINPLIYLFF. Topologically, residues 349–427 are cytoplasmic; sequence QAGDCRLWRR…PPPCSCESAF (79 aa). The interval 402-427 is disordered; it reads EERNQGCLRPPPPRPRPPPCSCESAF. A compositionally biased stretch (pro residues) spans 410–421; sequence RPPPPRPRPPPC.

Belongs to the G-protein coupled receptor 1 family.

It is found in the cell membrane. Its function is as follows. Orphan receptor. The chain is Probable G-protein coupled receptor 150 (Gpr150) from Mus musculus (Mouse).